We begin with the raw amino-acid sequence, 603 residues long: Serine/threonine-protein kinase HAL4/SAT4 (603 aa).

3 stretches are compositionally biased toward polar residues: residues 1–15 (MTGM…PQQT), 30–60 (RSGS…SASK), and 68–85 (TPTT…NTAG). Disordered regions lie at residues 1 to 86 (MTGM…TAGV), 150 to 171 (LSPK…PTPT), and 267 to 301 (DKYP…THNI). Positions 159–171 (NSNTAITPAPTPT) are enriched in low complexity. Over residues 282–296 (PERDIYRSDQKDSKN) the composition is skewed to basic and acidic residues. Residues 316-590 (GRCQEVLGKG…GKQILNSEWG (275 aa)) enclose the Protein kinase domain. ATP is bound by residues 322–330 (LGKGAFGVV) and Lys353. Asp449 serves as the catalytic Proton acceptor.

The protein belongs to the protein kinase superfamily. Ser/Thr protein kinase family.

It catalyses the reaction L-seryl-[protein] + ATP = O-phospho-L-seryl-[protein] + ADP + H(+). The enzyme catalyses L-threonyl-[protein] + ATP = O-phospho-L-threonyl-[protein] + ADP + H(+). Its function is as follows. Promotes K(+) uptake, by the potassium transporter TRK1-TRK2, which leads to the subsequent cellular resistance to toxic cations such as Na(+), Li(+) and Ca(2+). This is Serine/threonine-protein kinase HAL4/SAT4 (SAT4) from Saccharomyces cerevisiae (strain ATCC 204508 / S288c) (Baker's yeast).